A 98-amino-acid chain; its full sequence is Large ribosomal subunit protein uL23 (98 aa).

Belongs to the universal ribosomal protein uL23 family. Part of the 50S ribosomal subunit. Contacts protein L29, and trigger factor when it is bound to the ribosome.

Its function is as follows. One of the early assembly proteins it binds 23S rRNA. One of the proteins that surrounds the polypeptide exit tunnel on the outside of the ribosome. Forms the main docking site for trigger factor binding to the ribosome. The sequence is that of Large ribosomal subunit protein uL23 from Nitrosococcus oceani (strain ATCC 19707 / BCRC 17464 / JCM 30415 / NCIMB 11848 / C-107).